The primary structure comprises 412 residues: Serine hydroxymethyltransferase (412 aa).

Residues Leu117 and 121-123 (GHL) each bind (6S)-5,6,7,8-tetrahydrofolate. At Lys226 the chain carries N6-(pyridoxal phosphate)lysine. (6S)-5,6,7,8-tetrahydrofolate is bound by residues Glu242 and 350–352 (SPF).

The protein belongs to the SHMT family. In terms of assembly, homodimer. Requires pyridoxal 5'-phosphate as cofactor.

It is found in the cytoplasm. The catalysed reaction is (6R)-5,10-methylene-5,6,7,8-tetrahydrofolate + glycine + H2O = (6S)-5,6,7,8-tetrahydrofolate + L-serine. It functions in the pathway one-carbon metabolism; tetrahydrofolate interconversion. Its pathway is amino-acid biosynthesis; glycine biosynthesis; glycine from L-serine: step 1/1. Functionally, catalyzes the reversible interconversion of serine and glycine with tetrahydrofolate (THF) serving as the one-carbon carrier. Also exhibits THF-independent aldolase activity toward beta-hydroxyamino acids, producing glycine and aldehydes, via a retro-aldol mechanism. This is Serine hydroxymethyltransferase from Methanosarcina acetivorans (strain ATCC 35395 / DSM 2834 / JCM 12185 / C2A).